Reading from the N-terminus, the 553-residue chain is Glucose-6-phosphate isomerase (553 aa).

Glu357 serves as the catalytic Proton donor. Active-site residues include His388 and Lys514. Positions 527–553 (ADSPAAQSDSSTDALVRRYRTERGRTA) are disordered. Over residues 541-553 (LVRRYRTERGRTA) the composition is skewed to basic and acidic residues.

This sequence belongs to the GPI family.

It localises to the cytoplasm. It catalyses the reaction alpha-D-glucose 6-phosphate = beta-D-fructose 6-phosphate. The protein operates within carbohydrate biosynthesis; gluconeogenesis. Its pathway is carbohydrate degradation; glycolysis; D-glyceraldehyde 3-phosphate and glycerone phosphate from D-glucose: step 2/4. Catalyzes the reversible isomerization of glucose-6-phosphate to fructose-6-phosphate. This is Glucose-6-phosphate isomerase from Mycolicibacterium vanbaalenii (strain DSM 7251 / JCM 13017 / BCRC 16820 / KCTC 9966 / NRRL B-24157 / PYR-1) (Mycobacterium vanbaalenii).